A 397-amino-acid polypeptide reads, in one-letter code: Arginine biosynthesis bifunctional protein ArgJ (397 aa).

6 residues coordinate substrate: Thr147, Lys173, Thr184, Glu270, Asn392, and Thr397. Thr184 functions as the Nucleophile in the catalytic mechanism.

Belongs to the ArgJ family. Heterotetramer of two alpha and two beta chains.

Its subcellular location is the cytoplasm. It carries out the reaction N(2)-acetyl-L-ornithine + L-glutamate = N-acetyl-L-glutamate + L-ornithine. The enzyme catalyses L-glutamate + acetyl-CoA = N-acetyl-L-glutamate + CoA + H(+). It functions in the pathway amino-acid biosynthesis; L-arginine biosynthesis; L-ornithine and N-acetyl-L-glutamate from L-glutamate and N(2)-acetyl-L-ornithine (cyclic): step 1/1. Its pathway is amino-acid biosynthesis; L-arginine biosynthesis; N(2)-acetyl-L-ornithine from L-glutamate: step 1/4. Catalyzes two activities which are involved in the cyclic version of arginine biosynthesis: the synthesis of N-acetylglutamate from glutamate and acetyl-CoA as the acetyl donor, and of ornithine by transacetylation between N(2)-acetylornithine and glutamate. The chain is Arginine biosynthesis bifunctional protein ArgJ from Streptococcus mutans serotype c (strain ATCC 700610 / UA159).